The primary structure comprises 124 residues: Small ribosomal subunit protein uS12 (124 aa).

A 3-methylthioaspartic acid modification is found at D89. The segment at 104-124 is disordered; sequence ATGVKDRKQGRSKYGAKRPKE. Residues 113 to 124 are compositionally biased toward basic residues; sequence GRSKYGAKRPKE.

The protein belongs to the universal ribosomal protein uS12 family. As to quaternary structure, part of the 30S ribosomal subunit. Contacts proteins S8 and S17. May interact with IF1 in the 30S initiation complex.

With S4 and S5 plays an important role in translational accuracy. Its function is as follows. Interacts with and stabilizes bases of the 16S rRNA that are involved in tRNA selection in the A site and with the mRNA backbone. Located at the interface of the 30S and 50S subunits, it traverses the body of the 30S subunit contacting proteins on the other side and probably holding the rRNA structure together. The combined cluster of proteins S8, S12 and S17 appears to hold together the shoulder and platform of the 30S subunit. In Picosynechococcus sp. (strain ATCC 27264 / PCC 7002 / PR-6) (Agmenellum quadruplicatum), this protein is Small ribosomal subunit protein uS12.